An 865-amino-acid chain; its full sequence is DNA-directed RNA polymerase subunit Rpo1N (865 aa).

C60, C63, C70, H73, C100, C103, C146, and C149 together coordinate Zn(2+). 3 residues coordinate Mg(2+): D451, D453, and D455. The segment at E500–G531 is disordered. Positions R515–G531 are enriched in basic and acidic residues.

The protein belongs to the RNA polymerase beta' chain family. In terms of assembly, part of the RNA polymerase complex. The cofactor is Mg(2+). Zn(2+) is required as a cofactor.

It is found in the cytoplasm. The enzyme catalyses RNA(n) + a ribonucleoside 5'-triphosphate = RNA(n+1) + diphosphate. Its function is as follows. DNA-dependent RNA polymerase (RNAP) catalyzes the transcription of DNA into RNA using the four ribonucleoside triphosphates as substrates. Forms the clamp head domain. In Methanothermobacter thermautotrophicus (strain Winter) (Methanobacterium thermoautotrophicum), this protein is DNA-directed RNA polymerase subunit Rpo1N.